A 509-amino-acid chain; its full sequence is Maturase K (509 aa).

The protein belongs to the intron maturase 2 family. MatK subfamily.

It is found in the plastid. Its subcellular location is the chloroplast. Functionally, usually encoded in the trnK tRNA gene intron. Probably assists in splicing its own and other chloroplast group II introns. The polypeptide is Maturase K (Nicotiana alata (Winged tobacco)).